Reading from the N-terminus, the 287-residue chain is Elongation factor Ts (287 aa).

The involved in Mg(2+) ion dislocation from EF-Tu stretch occupies residues 79-82 (TDFV).

The protein belongs to the EF-Ts family.

It localises to the cytoplasm. Functionally, associates with the EF-Tu.GDP complex and induces the exchange of GDP to GTP. It remains bound to the aminoacyl-tRNA.EF-Tu.GTP complex up to the GTP hydrolysis stage on the ribosome. This chain is Elongation factor Ts, found in Anaplasma phagocytophilum (strain HZ).